We begin with the raw amino-acid sequence, 462 residues long: 7-hydroxymethyl chlorophyll a reductase, chloroplastic (462 aa).

A chloroplast-targeting transit peptide spans 1 to 20 (MITVVTSRLSLLPPVFSVVN).

It belongs to the FrhB family. In terms of assembly, interacts with SGR1, the chlorophyll catabolic enzymes (CCEs) NYC1, NOL and RCCR, and the LHCII complex. Part of a SGR1-CCE-LHCII complex, which acts in chlorophyll breakdown. FAD serves as cofactor. Iron-sulfur cluster is required as a cofactor.

The protein localises to the plastid. The protein resides in the chloroplast. The enzyme catalyses chlorophyll a + 2 oxidized [2Fe-2S]-[ferredoxin] + H2O = 7(1)-hydroxychlorophyll a + 2 reduced [2Fe-2S]-[ferredoxin] + 2 H(+). In terms of biological role, probable iron-sulfur flavoprotein that converts 7-hydroxymethyl chlorophyll a to chlorophyll a using ferredoxin as a reducing equivalent. Catalyzes the reduction of a hydroxymethyl group to a methyl group. Belongs to the chlorophyll catabolic enzymes (CCEs). This is 7-hydroxymethyl chlorophyll a reductase, chloroplastic (HCAR) from Arabidopsis thaliana (Mouse-ear cress).